The sequence spans 521 residues: Glucose-1-phosphate adenylyltransferase large subunit 3, chloroplastic (521 aa).

The transit peptide at 1 to 61 (MDSCCNFSLG…RKLRPGVAYA (61 aa)) directs the protein to the chloroplast.

Belongs to the bacterial/plant glucose-1-phosphate adenylyltransferase family. In terms of assembly, heterotetramer. In terms of tissue distribution, probably are expressed in roots, flowers and/or seeds.

It localises to the plastid. The protein localises to the chloroplast. It catalyses the reaction alpha-D-glucose 1-phosphate + ATP + H(+) = ADP-alpha-D-glucose + diphosphate. The protein operates within glycan biosynthesis; starch biosynthesis. Activated by 3'phosphoglycerate, inhibited by orthophosphate. Allosteric regulation. Functionally, this protein plays a role in synthesis of starch. It catalyzes the synthesis of the activated glycosyl donor, ADP-glucose from Glc-1-P and ATP. The chain is Glucose-1-phosphate adenylyltransferase large subunit 3, chloroplastic (APL3) from Arabidopsis thaliana (Mouse-ear cress).